The chain runs to 704 residues: Polyribonucleotide nucleotidyltransferase (704 aa).

D487 and D493 together coordinate Mg(2+). In terms of domain architecture, KH spans P554–I613. Residues G623–K691 form the S1 motif domain.

The protein belongs to the polyribonucleotide nucleotidyltransferase family. As to quaternary structure, component of the RNA degradosome, which is a multiprotein complex involved in RNA processing and mRNA degradation. Mg(2+) is required as a cofactor.

It localises to the cytoplasm. The enzyme catalyses RNA(n+1) + phosphate = RNA(n) + a ribonucleoside 5'-diphosphate. Involved in mRNA degradation. Catalyzes the phosphorolysis of single-stranded polyribonucleotides processively in the 3'- to 5'-direction. This is Polyribonucleotide nucleotidyltransferase from Xanthomonas campestris pv. campestris (strain 8004).